The chain runs to 149 residues: UPF0102 protein Bpro_0391 (149 aa).

A disordered region spans residues 1–30 (MWFSRKQVVKPPPDGSRAQPGQVTTKSRGD).

It belongs to the UPF0102 family.

The protein is UPF0102 protein Bpro_0391 of Polaromonas sp. (strain JS666 / ATCC BAA-500).